The chain runs to 106 residues: Small ribosomal subunit protein uS10 (106 aa).

The protein belongs to the universal ribosomal protein uS10 family. In terms of assembly, part of the 30S ribosomal subunit.

Its function is as follows. Involved in the binding of tRNA to the ribosomes. In Synechococcus sp. (strain CC9902), this protein is Small ribosomal subunit protein uS10.